Here is a 381-residue protein sequence, read N- to C-terminus: MRAVPLPLSRTASLSLGFLLLLSLCLDPGQAKELKFVTLVFRHGDRGPIETFPTDPITESSWPQGFGQLTQWGMEQHYELGSYIRKRYGRFLNDTYKHDQIYIRSTDVDRTLMSAMTNLAALFPPEGISIWNPRLLWQPIPVHTVSLSEDRLLYLPFRDCPRFEELKSETLESEEFLKRLHPYKSFLDTLSSLSGFDDQDLFGIWSKVYDPLFCESVHNFTLPSWATEDAMIKLKELSELSLLSLYGIHKQKEKSRLQGGVLVNEILKNMKLATQPQKYKKLVMYSAHDTTVSGLQMALDVYNGVLPPYASCHMMELYHDKGGHFVEMYYRNETQNEPYPLTLPGCTHSCPLEKFAELLDPVISQDWATECMATSSHQGRN.

The N-terminal stretch at 1–31 (MRAVPLPLSRTASLSLGFLLLLSLCLDPGQA) is a signal peptide. Arg-42 contacts substrate. Catalysis depends on His-43, which acts as the Nucleophile. Arg-46 lines the substrate pocket. N-linked (GlcNAc...) asparagine glycosylation is present at Asn-93. Arg-110 is a binding site for substrate. Cystine bridges form between Cys-160–Cys-371, Cys-214–Cys-312, and Cys-346–Cys-350. Asn-219 carries an N-linked (GlcNAc...) asparagine glycan. His-288 provides a ligand contact to substrate. The active-site Proton donor is the Asp-289. Residue Asn-332 is glycosylated (N-linked (GlcNAc...) asparagine).

It belongs to the histidine acid phosphatase family. In terms of assembly, homodimer; dimer formation is required for phosphatase activity. In terms of tissue distribution, expressed in salivary gland, thymus and thyroid gland. Widely expressed in prostate lobes, brain, kidney, liver, lung, muscle, placenta, salivary gland, spleen, thyroid and thymus. Locates to Schwann cells and fibroblasts. Expressed in peptidergic and non-peptidergic nociceptive (pain-sensing) neurons. Preferentially expressed in non-peptidergic doral root ganglia neurons.

Its subcellular location is the secreted. The protein resides in the cell membrane. It localises to the lysosome membrane. It carries out the reaction a phosphate monoester + H2O = an alcohol + phosphate. The enzyme catalyses a ribonucleoside 5'-phosphate + H2O = a ribonucleoside + phosphate. The catalysed reaction is 1-(9Z-octadecenoyl)-sn-glycero-3-phosphate + H2O = 1-(9Z-octadecenoyl)-sn-glycerol + phosphate. It catalyses the reaction O-phospho-L-tyrosyl-[protein] + H2O = L-tyrosyl-[protein] + phosphate. Functionally, a non-specific tyrosine phosphatase that dephosphorylates a diverse number of substrates under acidic conditions (pH 4-6) including alkyl, aryl, and acyl orthophosphate monoesters and phosphorylated proteins. Has lipid phosphatase activity and inactivates lysophosphatidic acid in seminal plasma. In addition to its tyrosine phosphatase activity, also has ecto-5'-nucleotidase activity in dorsal root ganglion (DRG) neurons. Generates adenosine from AMP. This extracellular adenosine leads to a decrease in chronic pain by activating A1R in nociceptive neurons. This Mus musculus (Mouse) protein is Prostatic acid phosphatase (Acp3).